The primary structure comprises 919 residues: Valine--tRNA ligase (919 aa).

Positions proline 46–histidine 56 match the 'HIGH' region motif. The 'KMSKS' region motif lies at lysine 528–serine 532. Lysine 531 serves as a coordination point for ATP. Residues leucine 849 to glycine 919 are a coiled coil.

Belongs to the class-I aminoacyl-tRNA synthetase family. ValS type 1 subfamily. Monomer.

It is found in the cytoplasm. The catalysed reaction is tRNA(Val) + L-valine + ATP = L-valyl-tRNA(Val) + AMP + diphosphate. In terms of biological role, catalyzes the attachment of valine to tRNA(Val). As ValRS can inadvertently accommodate and process structurally similar amino acids such as threonine, to avoid such errors, it has a 'posttransfer' editing activity that hydrolyzes mischarged Thr-tRNA(Val) in a tRNA-dependent manner. In Francisella tularensis subsp. tularensis (strain SCHU S4 / Schu 4), this protein is Valine--tRNA ligase.